Consider the following 895-residue polypeptide: Alanine--tRNA ligase (895 aa).

Positions 577, 581, 680, and 684 each coordinate Zn(2+).

It belongs to the class-II aminoacyl-tRNA synthetase family. Zn(2+) is required as a cofactor.

Its subcellular location is the cytoplasm. It catalyses the reaction tRNA(Ala) + L-alanine + ATP = L-alanyl-tRNA(Ala) + AMP + diphosphate. In terms of biological role, catalyzes the attachment of alanine to tRNA(Ala) in a two-step reaction: alanine is first activated by ATP to form Ala-AMP and then transferred to the acceptor end of tRNA(Ala). Also edits incorrectly charged Ser-tRNA(Ala) and Gly-tRNA(Ala) via its editing domain. The polypeptide is Alanine--tRNA ligase (Kocuria rhizophila (strain ATCC 9341 / DSM 348 / NBRC 103217 / DC2201)).